Reading from the N-terminus, the 226-residue chain is ATP synthase F(0) complex subunit a (226 aa).

Transmembrane regions (helical) follow at residues 6–26 (FASFAAPTILGLPAAVLIILF), 68–88 (WSLMLVSLIIFIATTNLLGLL), 97–117 (QLSMNLAMAIPLWAGTVVMGF), 138–158 (IPMLIIIETISLFIQPMALAV), 164–184 (ITAGHLLMHLIGSATLALSTI), and 189–209 (TLIIFTILILLTVLEIAVALI).

It belongs to the ATPase A chain family. As to quaternary structure, component of the ATP synthase complex composed at least of ATP5F1A/subunit alpha, ATP5F1B/subunit beta, ATP5MC1/subunit c (homooctomer), MT-ATP6/subunit a, MT-ATP8/subunit 8, ATP5ME/subunit e, ATP5MF/subunit f, ATP5MG/subunit g, ATP5MK/subunit k, ATP5MJ/subunit j, ATP5F1C/subunit gamma, ATP5F1D/subunit delta, ATP5F1E/subunit epsilon, ATP5PF/subunit F6, ATP5PB/subunit b, ATP5PD/subunit d, ATP5PO/subunit OSCP. ATP synthase complex consists of a soluble F(1) head domain (subunits alpha(3) and beta(3)) - the catalytic core - and a membrane F(0) domain - the membrane proton channel (subunits c, a, 8, e, f, g, k and j). These two domains are linked by a central stalk (subunits gamma, delta, and epsilon) rotating inside the F1 region and a stationary peripheral stalk (subunits F6, b, d, and OSCP). Interacts with DNAJC30; interaction is direct.

The protein localises to the mitochondrion inner membrane. The catalysed reaction is H(+)(in) = H(+)(out). Subunit a, of the mitochondrial membrane ATP synthase complex (F(1)F(0) ATP synthase or Complex V) that produces ATP from ADP in the presence of a proton gradient across the membrane which is generated by electron transport complexes of the respiratory chain. ATP synthase complex consist of a soluble F(1) head domain - the catalytic core - and a membrane F(1) domain - the membrane proton channel. These two domains are linked by a central stalk rotating inside the F(1) region and a stationary peripheral stalk. During catalysis, ATP synthesis in the catalytic domain of F(1) is coupled via a rotary mechanism of the central stalk subunits to proton translocation. With the subunit c (ATP5MC1), forms the proton-conducting channel in the F(0) domain, that contains two crucial half-channels (inlet and outlet) that facilitate proton movement from the mitochondrial intermembrane space (IMS) into the matrix. Protons are taken up via the inlet half-channel and released through the outlet half-channel, following a Grotthuss mechanism. The polypeptide is ATP synthase F(0) complex subunit a (Pan paniscus (Pygmy chimpanzee)).